The chain runs to 489 residues: MLPVVALVGRPNVGKSTLFNRLTRTRDALVADFPGLTRDRKYGQAKIDEHEFIVIDTGGITGDEEGIDALMAGQSLLAIDEADAVLFLVDARAGMTIADEAIADHLRKQDKKVFVVANKTDGVDADSVCAEFYALGLGEVYHIAAAQGKGVRQMIEIALDGFFDDVEQEDDFSDLETGLEFVEEDEALLLKEQERLAALPIKLALIGRPNVGKSTLTNRILGEERVLVYDLPGTTRDSIYIPMSRDDREYILIDTAGVRKRKKVNETVEKFSVIKTLQAIEDCNVVLLIIDARDGISDQDLSLLGFTLNAGRSLVIAVNKWDGMTEYDKERVKSELDRRLGFIDFAKIHFISALHGTGVGHLYESVEEAYDSSTKRISTSILTRIMTMAAADHEPPMVGSRRVKLRYAHAGGYNPPLIVIHGNQVKKLADSYKRYLMNYFRRSLGIMGTPIRIEFREGTNPFAGRRNKLTPNQMYKRQRLVKFHKKSKK.

EngA-type G domains follow at residues proline 3–valine 166 and isoleucine 201–threonine 374. GTP-binding positions include glycine 9–serine 16, aspartate 56–isoleucine 60, asparagine 118–aspartate 121, glycine 207–serine 214, aspartate 254–valine 258, and asparagine 319–aspartate 322. Positions lysine 375–threonine 459 constitute a KH-like domain.

This sequence belongs to the TRAFAC class TrmE-Era-EngA-EngB-Septin-like GTPase superfamily. EngA (Der) GTPase family. In terms of assembly, associates with the 50S ribosomal subunit.

In terms of biological role, GTPase that plays an essential role in the late steps of ribosome biogenesis. In Psychromonas ingrahamii (strain DSM 17664 / CCUG 51855 / 37), this protein is GTPase Der.